The primary structure comprises 93 residues: Large ribosomal subunit protein uL23cz/uL23cy (93 aa).

The protein belongs to the universal ribosomal protein uL23 family. As to quaternary structure, part of the 50S ribosomal subunit.

The protein resides in the plastid. The protein localises to the chloroplast. In terms of biological role, binds to 23S rRNA. This Acorus calamus (Sweet flag) protein is Large ribosomal subunit protein uL23cz/uL23cy (rpl23-A).